The chain runs to 218 residues: Small ribosomal subunit protein uS3c (218 aa).

Positions I39–K109 constitute a KH type-2 domain.

The protein belongs to the universal ribosomal protein uS3 family. In terms of assembly, part of the 30S ribosomal subunit.

It is found in the plastid. The protein resides in the chloroplast. The chain is Small ribosomal subunit protein uS3c (rps3) from Rhodomonas salina (Cryptomonas salina).